The chain runs to 105 residues: uncharacterized protein (105 aa).

The chain crosses the membrane as a helical span at residues Gly-41–Phe-62.

The protein localises to the membrane. This is an uncharacterized protein from Saccharomyces cerevisiae (strain ATCC 204508 / S288c) (Baker's yeast).